A 197-amino-acid chain; its full sequence is Dephospho-CoA kinase (197 aa).

Residues 4-197 (RLGLTGSIGM…RQIRAGNIHA (194 aa)) form the DPCK domain. Residue 12 to 17 (GMGKST) participates in ATP binding.

The protein belongs to the CoaE family.

It is found in the cytoplasm. It carries out the reaction 3'-dephospho-CoA + ATP = ADP + CoA + H(+). The protein operates within cofactor biosynthesis; coenzyme A biosynthesis; CoA from (R)-pantothenate: step 5/5. Functionally, catalyzes the phosphorylation of the 3'-hydroxyl group of dephosphocoenzyme A to form coenzyme A. The protein is Dephospho-CoA kinase of Ruegeria pomeroyi (strain ATCC 700808 / DSM 15171 / DSS-3) (Silicibacter pomeroyi).